A 127-amino-acid polypeptide reads, in one-letter code: Small ribosomal subunit protein uS11 (127 aa).

Belongs to the universal ribosomal protein uS11 family. In terms of assembly, part of the 30S ribosomal subunit. Interacts with proteins S7 and S18. Binds to IF-3.

Functionally, located on the platform of the 30S subunit, it bridges several disparate RNA helices of the 16S rRNA. Forms part of the Shine-Dalgarno cleft in the 70S ribosome. The sequence is that of Small ribosomal subunit protein uS11 from Chlorobium chlorochromatii (strain CaD3).